The following is a 396-amino-acid chain: Na(+)/H(+) antiporter NhaA (396 aa).

11 consecutive transmembrane segments (helical) span residues 16–36 (GIIL…GLAG), 59–79 (LLLW…GLEV), 95–115 (TFPA…YAFF), 124–144 (AGWA…MALL), 154–174 (VFLL…IALF), 178–198 (QLSL…LWMN), 213–233 (LVLW…GVIV), 254–274 (ALHP…NAGV), 278–298 (GIGL…GLFI), 328–348 (IFAV…IASL), and 363–383 (LGIL…LRIA).

The protein belongs to the NhaA Na(+)/H(+) (TC 2.A.33) antiporter family.

It is found in the cell inner membrane. It catalyses the reaction Na(+)(in) + 2 H(+)(out) = Na(+)(out) + 2 H(+)(in). Its function is as follows. Na(+)/H(+) antiporter that extrudes sodium in exchange for external protons. The sequence is that of Na(+)/H(+) antiporter NhaA from Aeromonas hydrophila subsp. hydrophila (strain ATCC 7966 / DSM 30187 / BCRC 13018 / CCUG 14551 / JCM 1027 / KCTC 2358 / NCIMB 9240 / NCTC 8049).